The following is a 268-amino-acid chain: Protein CDV3 homolog (268 aa).

The segment covering 40–50 has biased composition (basic and acidic residues); it reads KREVVKPKKPE. Disordered stretches follow at residues 40 to 145 and 184 to 268; these read KREV…ERVG and QQAG…DEAS. A compositionally biased stretch (low complexity) spans 51–61; that stretch reads AAAGGVAVVGE. Acidic residues predominate over residues 76–85; that stretch reads VEEEWKEFEE. Polar residues predominate over residues 98-107; the sequence is QLSTITAQES. Residues 123 to 132 show a composition bias toward acidic residues; that stretch reads NYDEDDEDSN. A compositionally biased stretch (basic and acidic residues) spans 221–239; sequence RPEEQRKKKNEPAFEEVRH.

The protein belongs to the CDV3 family.

The protein is Protein CDV3 homolog of Drosophila yakuba (Fruit fly).